The primary structure comprises 1208 residues: Calmodulin-binding transcription activator 2 (1208 aa).

The CG-1 DNA-binding region spans 30 to 160 (RCPLLPPERL…YLNVPALEDC (131 aa)). Residues 78-86 (NRKKVKYRK) carry the Nuclear localization signal motif. 3 disordered regions span residues 269-328 (ISHS…SRGG), 366-418 (VGSE…PCPA), and 437-507 (QLGA…ELEP). Over residues 275 to 288 (PEPPPLIAPLPPEL) the composition is skewed to pro residues. Composition is skewed to low complexity over residues 294–305 (SPSSSSSSSSSS) and 319–328 (TSRGGSSRGG). Pro residues-rich tracts occupy residues 371–380 (SAPPAPPSPA) and 464–476 (TVPP…PSSP). The IPT/TIG domain maps to 544–622 (DFSPEWSYPE…LSASVLFEYR (79 aa)). ANK repeat units lie at residues 717-750 (RGMS…SLDL), 762-792 (FSCT…ALSI), and 796-826 (LGRL…ELSV). Disordered regions lie at residues 826 to 881 (VEHP…ASDI) and 908 to 936 (NSKE…DSPP). Over residues 829–853 (PLALSPPSSSPDTGLSSASSPSELS) the composition is skewed to low complexity. IQ domains are found at residues 1054–1083 (LYEA…AAAV) and 1107–1136 (MTQA…AAVL). The tract at residues 1144–1166 (YRRRPGPPHRPSGPLPARNKGTF) is disordered.

Belongs to the CAMTA family. May interact with calmodulin.

The protein resides in the nucleus. Its function is as follows. Transcription activator. May act as tumor suppressor. The protein is Calmodulin-binding transcription activator 2 (Camta2) of Mus musculus (Mouse).